The chain runs to 279 residues: uncharacterized protein (279 aa).

The next 3 membrane-spanning stretches (helical) occupy residues 31–51 (GYIAQALGIADVLAVAYFHAT), 67–87 (LLSIGHYAIALYAALIEAKII), and 115–135 (EITGGSLGHGLGIAVGMSLAL).

It belongs to the transketolase family. It depends on thiamine diphosphate as a cofactor.

The protein resides in the cell membrane. This is an uncharacterized protein from Sinorhizobium fredii (strain NBRC 101917 / NGR234).